The primary structure comprises 252 residues: Imidazole glycerol phosphate synthase subunit HisF (252 aa).

Catalysis depends on residues aspartate 11 and aspartate 130.

This sequence belongs to the HisA/HisF family. In terms of assembly, heterodimer of HisH and HisF.

It localises to the cytoplasm. The enzyme catalyses 5-[(5-phospho-1-deoxy-D-ribulos-1-ylimino)methylamino]-1-(5-phospho-beta-D-ribosyl)imidazole-4-carboxamide + L-glutamine = D-erythro-1-(imidazol-4-yl)glycerol 3-phosphate + 5-amino-1-(5-phospho-beta-D-ribosyl)imidazole-4-carboxamide + L-glutamate + H(+). It participates in amino-acid biosynthesis; L-histidine biosynthesis; L-histidine from 5-phospho-alpha-D-ribose 1-diphosphate: step 5/9. Functionally, IGPS catalyzes the conversion of PRFAR and glutamine to IGP, AICAR and glutamate. The HisF subunit catalyzes the cyclization activity that produces IGP and AICAR from PRFAR using the ammonia provided by the HisH subunit. The sequence is that of Imidazole glycerol phosphate synthase subunit HisF from Halothermothrix orenii (strain H 168 / OCM 544 / DSM 9562).